We begin with the raw amino-acid sequence, 202 residues long: MKALTARQQEVFDLIRDHISQTGMPPTRAEIAQRLGFRSPNAAEEHLKALARKGVLEIVSGASRGIRLLQEEEDGLPLVGRVAAGEPLLAQQHIEGHYQVDPSLFKPSADFLLRVSGMSMKDIGIMDGDLLAVHKTQDVRNGQVVVARIDDEVTVKRLKKQGNKVELLPENSEFTPIVVDLREQSFTIEGLAVGVIRNGEWL.

The H-T-H motif DNA-binding region spans 28 to 48; sequence RAEIAQRLGFRSPNAAEEHLK. Residues S119 and K156 each act as for autocatalytic cleavage activity in the active site.

Belongs to the peptidase S24 family. As to quaternary structure, homodimer.

It catalyses the reaction Hydrolysis of Ala-|-Gly bond in repressor LexA.. Functionally, represses a number of genes involved in the response to DNA damage (SOS response), including recA and lexA. Binds to the 16 bp palindromic sequence 5'-CTGTATATATATACAG-3'. In the presence of single-stranded DNA, RecA interacts with LexA causing an autocatalytic cleavage which disrupts the DNA-binding part of LexA, leading to derepression of the SOS regulon and eventually DNA repair. The sequence is that of LexA repressor from Salmonella agona (strain SL483).